The chain runs to 570 residues: Sulfite reductase [NADPH] hemoprotein beta-component (570 aa).

The [4Fe-4S] cluster site is built by Cys434, Cys440, Cys479, and Cys483. Cys483 lines the siroheme pocket.

The protein belongs to the nitrite and sulfite reductase 4Fe-4S domain family. As to quaternary structure, alpha(8)-beta(8). The alpha component is a flavoprotein, the beta component is a hemoprotein. Siroheme is required as a cofactor. [4Fe-4S] cluster serves as cofactor.

It carries out the reaction hydrogen sulfide + 3 NADP(+) + 3 H2O = sulfite + 3 NADPH + 4 H(+). Its pathway is sulfur metabolism; hydrogen sulfide biosynthesis; hydrogen sulfide from sulfite (NADPH route): step 1/1. In terms of biological role, component of the sulfite reductase complex that catalyzes the 6-electron reduction of sulfite to sulfide. This is one of several activities required for the biosynthesis of L-cysteine from sulfate. This chain is Sulfite reductase [NADPH] hemoprotein beta-component, found in Salmonella gallinarum (strain 287/91 / NCTC 13346).